Here is a 284-residue protein sequence, read N- to C-terminus: Acetyl-coenzyme A carboxylase carboxyl transferase subunit beta (284 aa).

One can recognise a CoA carboxyltransferase N-terminal domain in the interval 25–284 (LWVKCPETGA…LCKILTKSVQ (260 aa)).

Belongs to the AccD/PCCB family. As to quaternary structure, acetyl-CoA carboxylase is a heterohexamer composed of biotin carboxyl carrier protein (AccB), biotin carboxylase (AccC) and two subunits each of ACCase subunit alpha (AccA) and ACCase subunit beta (AccD).

The protein localises to the cytoplasm. The catalysed reaction is N(6)-carboxybiotinyl-L-lysyl-[protein] + acetyl-CoA = N(6)-biotinyl-L-lysyl-[protein] + malonyl-CoA. It participates in lipid metabolism; malonyl-CoA biosynthesis; malonyl-CoA from acetyl-CoA: step 1/1. In terms of biological role, component of the acetyl coenzyme A carboxylase (ACC) complex. Biotin carboxylase (BC) catalyzes the carboxylation of biotin on its carrier protein (BCCP) and then the CO(2) group is transferred by the transcarboxylase to acetyl-CoA to form malonyl-CoA. The protein is Acetyl-coenzyme A carboxylase carboxyl transferase subunit beta of Liberibacter asiaticus (strain psy62).